We begin with the raw amino-acid sequence, 234 residues long: Thiamine import ATP-binding protein ThiQ (234 aa).

In terms of domain architecture, ABC transporter spans 2–230 (LTLQQVHYYY…HSHPELVEFF (229 aa)). ATP is bound at residue 32–39 (GPSGAGKS).

Belongs to the ABC transporter superfamily. Thiamine importer (TC 3.A.1.19.1) family. In terms of assembly, the complex is composed of two ATP-binding proteins (ThiQ), two transmembrane proteins (ThiP) and a solute-binding protein (ThiB).

It is found in the cell inner membrane. The catalysed reaction is thiamine(out) + ATP + H2O = thiamine(in) + ADP + phosphate + H(+). In terms of biological role, part of the ABC transporter complex ThiBPQ involved in thiamine import. Responsible for energy coupling to the transport system. This chain is Thiamine import ATP-binding protein ThiQ, found in Vibrio vulnificus (strain CMCP6).